A 256-amino-acid polypeptide reads, in one-letter code: Imidazole glycerol phosphate synthase subunit HisF (256 aa).

Active-site residues include Asp-11 and Asp-130.

This sequence belongs to the HisA/HisF family. As to quaternary structure, heterodimer of HisH and HisF.

It is found in the cytoplasm. It carries out the reaction 5-[(5-phospho-1-deoxy-D-ribulos-1-ylimino)methylamino]-1-(5-phospho-beta-D-ribosyl)imidazole-4-carboxamide + L-glutamine = D-erythro-1-(imidazol-4-yl)glycerol 3-phosphate + 5-amino-1-(5-phospho-beta-D-ribosyl)imidazole-4-carboxamide + L-glutamate + H(+). It functions in the pathway amino-acid biosynthesis; L-histidine biosynthesis; L-histidine from 5-phospho-alpha-D-ribose 1-diphosphate: step 5/9. IGPS catalyzes the conversion of PRFAR and glutamine to IGP, AICAR and glutamate. The HisF subunit catalyzes the cyclization activity that produces IGP and AICAR from PRFAR using the ammonia provided by the HisH subunit. This is Imidazole glycerol phosphate synthase subunit HisF from Prochlorococcus marinus (strain MIT 9215).